The primary structure comprises 357 residues: Isoflavone 7-O-methyltransferase (357 aa).

S-adenosyl-L-methionine contacts are provided by residues V200–G203, D224, D224–R225, D244–M245, and K258. Catalysis depends on H262, which acts as the Proton acceptor.

Belongs to the class I-like SAM-binding methyltransferase superfamily. Cation-independent O-methyltransferase family. COMT subfamily.

The catalysed reaction is a 7-hydroxyisoflavone + S-adenosyl-L-methionine = a 7-methoxyisoflavone + S-adenosyl-L-homocysteine + H(+). Its function is as follows. 7-O-methyltransferase involved in the biosynthesis of isoformononetin. Can use daidzein as substrate, but not medicarpin or 2,7,4'-trihydroxyisoflavanone. In Glycyrrhiza echinata (Licorice), this protein is Isoflavone 7-O-methyltransferase (D7OMT).